The sequence spans 580 residues: Glutamyl-tRNA(Gln) amidotransferase subunit B-2, chloroplastic/mitochondrial (580 aa).

2 stretches are compositionally biased toward low complexity: residues 20 to 35 (RRDATAAASTSAATVS) and 42 to 59 (AVSTTTTTSSSSSSSAAV). The tract at residues 20–64 (RRDATAAASTSAATVSRGRRARAVSTTTTTSSSSSSSAAVDARDA) is disordered.

The protein belongs to the GatB/GatE family. GatB subfamily. As to quaternary structure, subunit of the heterotrimeric GatCAB amidotransferase (AdT) complex, composed of A, B and C subunits.

Its subcellular location is the mitochondrion. The protein localises to the plastid. It is found in the chloroplast. The enzyme catalyses L-glutamyl-tRNA(Gln) + L-glutamine + ATP + H2O = L-glutaminyl-tRNA(Gln) + L-glutamate + ADP + phosphate + H(+). Allows the formation of correctly charged Gln-tRNA(Gln) through the transamidation of misacylated Glu-tRNA(Gln) in chloroplasts and mitochondria. The reaction takes place in the presence of glutamine and ATP through an activated gamma-phospho-Glu-tRNA(Gln). The protein is Glutamyl-tRNA(Gln) amidotransferase subunit B-2, chloroplastic/mitochondrial of Micromonas pusilla (strain CCMP1545) (Picoplanktonic green alga).